The chain runs to 122 residues: Large ribosomal subunit protein uL14 (122 aa).

It belongs to the universal ribosomal protein uL14 family. Part of the 50S ribosomal subunit. Forms a cluster with proteins L3 and L19. In the 70S ribosome, L14 and L19 interact and together make contacts with the 16S rRNA in bridges B5 and B8.

Binds to 23S rRNA. Forms part of two intersubunit bridges in the 70S ribosome. The protein is Large ribosomal subunit protein uL14 of Buchnera aphidicola subsp. Schizaphis graminum (strain Sg).